Reading from the N-terminus, the 389-residue chain is (S)-8-oxocitronellyl enol synthase CYC1 (389 aa).

Residues 34–36 (TGI), 62–63 (RR), 80–81 (DV), 104–105 (AW), and glutamine 138 contribute to the NADP(+) site. Catalysis depends on residues lysine 142 and tyrosine 174. Lysine 142 and tyrosine 174 together coordinate substrate. NADP(+) contacts are provided by residues tyrosine 174, valine 201, and 208–210 (SMM). Serine 350 provides a ligand contact to substrate.

It belongs to the short-chain dehydrogenases/reductases (SDR) family. Highly divergent.

The enzyme catalyses (S)-8-oxocitronellyl enol + NADP(+) = (6E)-8-oxogeranial + NADPH + H(+). It carries out the reaction (S)-8-oxocitronellyl enol + NAD(+) = (6E)-8-oxogeranial + NADH + H(+). Functionally, iridoid synthase that catalyzes the first step in generation of the iridoid ring scaffold using the linear monoterpene (6E)-8-oxogeranial as substrate. Iridoids comprise a large family of distinctive bicyclic monoterpenes that possess a wide range of pharmacological activities, including anticancer, anti-inflammatory, antifungal and antibacterial activities. The polypeptide is (S)-8-oxocitronellyl enol synthase CYC1 (Camptotheca acuminata (Happy tree)).